The sequence spans 930 residues: SCY1-like protein 2 (930 aa).

Residues 32–327 enclose the Protein kinase domain; sequence FDVGRHIASG…ADQMTKIPFF (296 aa). The stretch at 443–479 is one HEAT repeat; the sequence is DEIKNSVLPMVYRALEAPSIQIQELCLNIIPTFANLI. 2 positions are modified to phosphoserine: S658 and S677. The tract at residues 658–706 is disordered; that stretch reads SGSESENREDGMQGKQKRGSLTLEEKQKLAKEQEQAQKLKSQQPLKPQV. Positions 680–694 are enriched in basic and acidic residues; it reads LEEKQKLAKEQEQAQ. A compositionally biased stretch (low complexity) spans 695–705; that stretch reads KLKSQQPLKPQ. Phosphothreonine is present on T708. Residues 895-930 are disordered; sequence GMQGNPFFNPQNFAQPPPTTMTSSSSASNDLKDLFG. Over residues 897–922 the composition is skewed to low complexity; sequence QGNPFFNPQNFAQPPPTTMTSSSSAS.

This sequence belongs to the protein kinase superfamily. As to quaternary structure, interacts with clathrin and AP2B1; the interaction mediates the association with the AP-2 complex. In terms of processing, could autophosphorylate in presence of poly-L-lysine. In terms of tissue distribution, ubiquitously expressed.

It localises to the cytoplasmic vesicle. The protein resides in the clathrin-coated vesicle. The protein localises to the golgi apparatus. Its subcellular location is the trans-Golgi network membrane. It is found in the endosome membrane. Functionally, component of the AP2-containing clathrin coat that may regulate clathrin-dependent trafficking at plasma membrane, TGN and endosomal system. A possible serine/threonine-protein kinase toward the beta2-subunit of the plasma membrane adapter complex AP2 and other proteins in presence of poly-L-lysine has not been confirmed. By regulating the expression of excitatory receptors at synapses, plays an essential role in neuronal function and signaling and in brain development. The polypeptide is SCY1-like protein 2 (Mus musculus (Mouse)).